A 90-amino-acid chain; its full sequence is Putative ATPase inhibitor, mitochondrial (90 aa).

The stretch at 42–89 forms a coiled coil; the sequence is ESREKAKEDFFVHQHEIEQLRKLKESLKLHREELDELESRVDKKMKSN.

This sequence belongs to the ATPase inhibitor family.

The protein localises to the mitochondrion. In terms of biological role, forms a one-to-one complex with ATPase to inhibit the enzyme activity completely. The protein is Putative ATPase inhibitor, mitochondrial (inh1) of Schizosaccharomyces pombe (strain 972 / ATCC 24843) (Fission yeast).